A 429-amino-acid chain; its full sequence is tRNA modification GTPase MnmE (429 aa).

Residues R20, E77, and R117 each contribute to the (6S)-5-formyl-5,6,7,8-tetrahydrofolate site. One can recognise a TrmE-type G domain in the interval 213-353; that stretch reads GFEVAILGAP…LVKAVSHRLS (141 aa). Position 223 (N223) interacts with K(+). GTP contacts are provided by residues 223–228, 242–248, and 267–270; these read NVGKSS, SSIAGTT, and DTAG. S227 provides a ligand contact to Mg(2+). Positions 242, 244, and 247 each coordinate K(+). Mg(2+) is bound at residue T248. K429 serves as a coordination point for (6S)-5-formyl-5,6,7,8-tetrahydrofolate.

Belongs to the TRAFAC class TrmE-Era-EngA-EngB-Septin-like GTPase superfamily. TrmE GTPase family. In terms of assembly, homodimer. Heterotetramer of two MnmE and two MnmG subunits. K(+) is required as a cofactor.

The protein resides in the cytoplasm. Its function is as follows. Exhibits a very high intrinsic GTPase hydrolysis rate. Involved in the addition of a carboxymethylaminomethyl (cmnm) group at the wobble position (U34) of certain tRNAs, forming tRNA-cmnm(5)s(2)U34. This chain is tRNA modification GTPase MnmE, found in Dinoroseobacter shibae (strain DSM 16493 / NCIMB 14021 / DFL 12).